We begin with the raw amino-acid sequence, 238 residues long: Ribonuclease PH (238 aa).

Residues R86 and 124–126 (GTR) contribute to the phosphate site.

Belongs to the RNase PH family. In terms of assembly, homohexameric ring arranged as a trimer of dimers.

It carries out the reaction tRNA(n+1) + phosphate = tRNA(n) + a ribonucleoside 5'-diphosphate. In terms of biological role, phosphorolytic 3'-5' exoribonuclease that plays an important role in tRNA 3'-end maturation. Removes nucleotide residues following the 3'-CCA terminus of tRNAs; can also add nucleotides to the ends of RNA molecules by using nucleoside diphosphates as substrates, but this may not be physiologically important. Probably plays a role in initiation of 16S rRNA degradation (leading to ribosome degradation) during starvation. The chain is Ribonuclease PH from Haemophilus influenzae (strain 86-028NP).